A 205-amino-acid polypeptide reads, in one-letter code: Ribonuclease HII (205 aa).

Residues 15-205 (SRVCGIDEAG…SFKLRKLGEK (191 aa)) enclose the RNase H type-2 domain. Residues Asp21, Glu22, and Asp117 each coordinate a divalent metal cation.

The protein belongs to the RNase HII family. Mn(2+) serves as cofactor. It depends on Mg(2+) as a cofactor.

Its subcellular location is the cytoplasm. The enzyme catalyses Endonucleolytic cleavage to 5'-phosphomonoester.. Functionally, endonuclease that specifically degrades the RNA of RNA-DNA hybrids. The polypeptide is Ribonuclease HII (Chlorobaculum parvum (strain DSM 263 / NCIMB 8327) (Chlorobium vibrioforme subsp. thiosulfatophilum)).